We begin with the raw amino-acid sequence, 592 residues long: Inactive glycosyltransferase 25 family member 3 (592 aa).

The signal sequence occupies residues 1–19 (MHVARLLPLLLLLGQQLRA). N-linked (GlcNAc...) asparagine glycans are attached at residues N72, N150, N234, and N357. The disordered stretch occupies residues 540–592 (AEWLSDTETSSPWDDDSGRLISQTGSQKALRGPHLHLTGSSGHSLHPHHRDEL). The short motif at 589–592 (RDEL) is the Prevents secretion from ER element.

The protein belongs to the glycosyltransferase 25 family.

Its subcellular location is the endoplasmic reticulum lumen. Functionally, probable cell adhesion protein involved in leukocyte transmigration across the blood-brain barrier. Does not express any beta-galactosyltransferase activity in vitro. The sequence is that of Inactive glycosyltransferase 25 family member 3 (Cercam) from Mus musculus (Mouse).